A 103-amino-acid polypeptide reads, in one-letter code: Histone H4 (103 aa).

Residues 1-14 (MSGRGKGGKGLGKG) show a composition bias toward gly residues. The interval 1-20 (MSGRGKGGKGLGKGGAKRHR) is disordered. A DNA-binding region spans residues 17-21 (KRHRK).

This sequence belongs to the histone H4 family. In terms of assembly, the nucleosome is a histone octamer containing two molecules each of H2A, H2B, H3 and H4 assembled in one H3-H4 heterotetramer and two H2A-H2B heterodimers. The octamer wraps approximately 147 bp of DNA.

The protein localises to the nucleus. The protein resides in the chromosome. Core component of nucleosome. Nucleosomes wrap and compact DNA into chromatin, limiting DNA accessibility to the cellular machineries which require DNA as a template. Histones thereby play a central role in transcription regulation, DNA repair, DNA replication and chromosomal stability. DNA accessibility is regulated via a complex set of post-translational modifications of histones, also called histone code, and nucleosome remodeling. This chain is Histone H4 (H4-I), found in Chlamydomonas reinhardtii (Chlamydomonas smithii).